The sequence spans 474 residues: 3-isopropylmalate dehydratase large subunit (474 aa).

A disordered region spans residues 293 to 313 (GTTPGQGIGITEEIPAPEDLP). 3 residues coordinate [4Fe-4S] cluster: Cys-348, Cys-408, and Cys-411.

The protein belongs to the aconitase/IPM isomerase family. LeuC type 1 subfamily. Heterodimer of LeuC and LeuD. [4Fe-4S] cluster is required as a cofactor.

The catalysed reaction is (2R,3S)-3-isopropylmalate = (2S)-2-isopropylmalate. It participates in amino-acid biosynthesis; L-leucine biosynthesis; L-leucine from 3-methyl-2-oxobutanoate: step 2/4. Functionally, catalyzes the isomerization between 2-isopropylmalate and 3-isopropylmalate, via the formation of 2-isopropylmaleate. The polypeptide is 3-isopropylmalate dehydratase large subunit (Natronomonas pharaonis (strain ATCC 35678 / DSM 2160 / CIP 103997 / JCM 8858 / NBRC 14720 / NCIMB 2260 / Gabara) (Halobacterium pharaonis)).